A 229-amino-acid polypeptide reads, in one-letter code: Flagellar L-ring protein 1 (229 aa).

An N-terminal signal peptide occupies residues 1-18 (MYLRKISAPLMTMLLLNG). C19 carries N-palmitoyl cysteine lipidation. Residue C19 is the site of S-diacylglycerol cysteine attachment.

Belongs to the FlgH family. In terms of assembly, the basal body constitutes a major portion of the flagellar organelle and consists of four rings (L,P,S, and M) mounted on a central rod.

It localises to the cell outer membrane. It is found in the bacterial flagellum basal body. Its function is as follows. Assembles around the rod to form the L-ring and probably protects the motor/basal body from shearing forces during rotation. The sequence is that of Flagellar L-ring protein 1 (flgH1) from Yersinia pseudotuberculosis serotype I (strain IP32953).